Reading from the N-terminus, the 581-residue chain is Proline--tRNA ligase (581 aa).

This sequence belongs to the class-II aminoacyl-tRNA synthetase family. ProS type 1 subfamily. Homodimer.

It localises to the cytoplasm. It catalyses the reaction tRNA(Pro) + L-proline + ATP = L-prolyl-tRNA(Pro) + AMP + diphosphate. Its function is as follows. Catalyzes the attachment of proline to tRNA(Pro) in a two-step reaction: proline is first activated by ATP to form Pro-AMP and then transferred to the acceptor end of tRNA(Pro). As ProRS can inadvertently accommodate and process non-cognate amino acids such as alanine and cysteine, to avoid such errors it has two additional distinct editing activities against alanine. One activity is designated as 'pretransfer' editing and involves the tRNA(Pro)-independent hydrolysis of activated Ala-AMP. The other activity is designated 'posttransfer' editing and involves deacylation of mischarged Ala-tRNA(Pro). The misacylated Cys-tRNA(Pro) is not edited by ProRS. The polypeptide is Proline--tRNA ligase (Leptothrix cholodnii (strain ATCC 51168 / LMG 8142 / SP-6) (Leptothrix discophora (strain SP-6))).